The following is a 34-amino-acid chain: Mu-theraphotoxin-CCy1a (34 aa).

Intrachain disulfides connect C3/C18, C10/C23, and C17/C30.

The protein belongs to the neurotoxin 10 (Hwtx-1) family. 14 (Hntx-1) subfamily. In terms of tissue distribution, expressed by the venom gland.

The protein localises to the secreted. Voltage-gated sodium channel Nav1.7/SCN9A inhibitor. In Chromatopelma cyaneopubescens (Greenbottle blue tarantula), this protein is Mu-theraphotoxin-CCy1a.